We begin with the raw amino-acid sequence, 2291 residues long: Protein Ycf2 (2291 aa).

1645–1652 (GSIGTGRS) serves as a coordination point for ATP.

Belongs to the Ycf2 family.

The protein localises to the plastid. Its subcellular location is the chloroplast stroma. Probable ATPase of unknown function. Its presence in a non-photosynthetic plant (Epifagus virginiana) and experiments in tobacco indicate that it has an essential function which is probably not related to photosynthesis. The sequence is that of Protein Ycf2 from Olimarabidopsis pumila (Dwarf rocket).